The sequence spans 124 residues: Small ribosomal subunit protein uS13 (124 aa).

The segment at 95–124 is disordered; it reads GLPVRGQRTRHNARTRKGPRKTVGAKKGKR. Basic residues predominate over residues 101–124; sequence QRTRHNARTRKGPRKTVGAKKGKR.

Belongs to the universal ribosomal protein uS13 family. As to quaternary structure, part of the 30S ribosomal subunit. Forms a loose heterodimer with protein S19. Forms two bridges to the 50S subunit in the 70S ribosome.

Its function is as follows. Located at the top of the head of the 30S subunit, it contacts several helices of the 16S rRNA. In the 70S ribosome it contacts the 23S rRNA (bridge B1a) and protein L5 of the 50S subunit (bridge B1b), connecting the 2 subunits; these bridges are implicated in subunit movement. Contacts the tRNAs in the A and P-sites. The polypeptide is Small ribosomal subunit protein uS13 (Coprothermobacter proteolyticus (strain ATCC 35245 / DSM 5265 / OCM 4 / BT)).